The sequence spans 202 residues: Small ribosomal subunit protein uS4 (202 aa).

Positions 15–43 are disordered; sequence LGDLPGLTRKAAKRSNPPGQHGNARRKRS. An S4 RNA-binding domain is found at 90–152; it reads GRLDNVCFRL…KGSKKLAEGN (63 aa).

It belongs to the universal ribosomal protein uS4 family. In terms of assembly, part of the 30S ribosomal subunit. Contacts protein S5. The interaction surface between S4 and S5 is involved in control of translational fidelity.

Its function is as follows. One of the primary rRNA binding proteins, it binds directly to 16S rRNA where it nucleates assembly of the body of the 30S subunit. In terms of biological role, with S5 and S12 plays an important role in translational accuracy. In Prochlorococcus marinus (strain SARG / CCMP1375 / SS120), this protein is Small ribosomal subunit protein uS4.